We begin with the raw amino-acid sequence, 102 residues long: Large ribosomal subunit protein uL24 (102 aa).

Belongs to the universal ribosomal protein uL24 family. In terms of assembly, part of the 50S ribosomal subunit.

One of two assembly initiator proteins, it binds directly to the 5'-end of the 23S rRNA, where it nucleates assembly of the 50S subunit. Its function is as follows. One of the proteins that surrounds the polypeptide exit tunnel on the outside of the subunit. This is Large ribosomal subunit protein uL24 from Polynucleobacter asymbioticus (strain DSM 18221 / CIP 109841 / QLW-P1DMWA-1) (Polynucleobacter necessarius subsp. asymbioticus).